The following is a 198-amino-acid chain: MIAHLRGTLLSKQPGQAIVECAGVGYDVAISVPTFTALPAEGAEVRLHIHTQVSEDAIALFGFLDREEKRLFERLITVSGVGPKLAIKMLSGLSPERTVAALRAQDHASLTRIPGVGKKLAERLVVELKDKLDDLIAAAPAAGPVAAGPAAEDVLSALLNLGYQRPAALKAIETAVEKDAAAGEDFDLLFRAALKLIR.

Residues 1-64 are domain I; that stretch reads MIAHLRGTLL…EDAIALFGFL (64 aa). Residues 65-141 form a domain II region; sequence DREEKRLFER…LDDLIAAAPA (77 aa). The interval 141–145 is flexible linker; it reads AAGPV. The tract at residues 146–198 is domain III; sequence AAGPAAEDVLSALLNLGYQRPAALKAIETAVEKDAAAGEDFDLLFRAALKLIR.

It belongs to the RuvA family. As to quaternary structure, homotetramer. Forms an RuvA(8)-RuvB(12)-Holliday junction (HJ) complex. HJ DNA is sandwiched between 2 RuvA tetramers; dsDNA enters through RuvA and exits via RuvB. An RuvB hexamer assembles on each DNA strand where it exits the tetramer. Each RuvB hexamer is contacted by two RuvA subunits (via domain III) on 2 adjacent RuvB subunits; this complex drives branch migration. In the full resolvosome a probable DNA-RuvA(4)-RuvB(12)-RuvC(2) complex forms which resolves the HJ.

It localises to the cytoplasm. Functionally, the RuvA-RuvB-RuvC complex processes Holliday junction (HJ) DNA during genetic recombination and DNA repair, while the RuvA-RuvB complex plays an important role in the rescue of blocked DNA replication forks via replication fork reversal (RFR). RuvA specifically binds to HJ cruciform DNA, conferring on it an open structure. The RuvB hexamer acts as an ATP-dependent pump, pulling dsDNA into and through the RuvAB complex. HJ branch migration allows RuvC to scan DNA until it finds its consensus sequence, where it cleaves and resolves the cruciform DNA. The sequence is that of Holliday junction branch migration complex subunit RuvA from Acidobacterium capsulatum (strain ATCC 51196 / DSM 11244 / BCRC 80197 / JCM 7670 / NBRC 15755 / NCIMB 13165 / 161).